The sequence spans 851 residues: Leucine--tRNA ligase (851 aa).

Positions 51–61 match the 'HIGH' region motif; the sequence is PYPSGDLHMGH. A 'KMSKS' region motif is present at residues 615–619; sequence KMSKS. Position 618 (K618) interacts with ATP.

It belongs to the class-I aminoacyl-tRNA synthetase family.

It is found in the cytoplasm. The catalysed reaction is tRNA(Leu) + L-leucine + ATP = L-leucyl-tRNA(Leu) + AMP + diphosphate. The protein is Leucine--tRNA ligase of Clavibacter michiganensis subsp. michiganensis (strain NCPPB 382).